The sequence spans 163 residues: MKEQQVISAELENLGYSLVEIEREAGGLLRVTIENPDYERLITVLDCEKVSHQLSYTLPVENIPYERLEISSPGLDRPVKSAADFQRFAGMEVDLKLRVAAGNRKNFRGELQGLLSGELNSPDAKFGLVFEGADGQSSQLEFSLAEVDKTRLVPVIDFKGRKS.

It belongs to the RimP family.

It localises to the cytoplasm. Its function is as follows. Required for maturation of 30S ribosomal subunits. This Polynucleobacter necessarius subsp. necessarius (strain STIR1) protein is Ribosome maturation factor RimP.